The primary structure comprises 117 residues: Chondroitin proteoglycan 7 (117 aa).

The signal sequence occupies residues 1–19 (MQTITLLALLACIAVPIFA). A disordered region spans residues 31–97 (VEASGEGSGE…SGENLSNGIV (67 aa)). Composition is skewed to low complexity over residues 32–41 (EASGEGSGES) and 48–57 (ESSGEGSGES). O-linked (Xyl...) (chondroitin sulfate) serine glycans are attached at residues serine 66, serine 70, serine 74, serine 84, and serine 88. Over residues 75–95 (GASDAVLESSGEGSGENLSNG) the composition is skewed to low complexity. N-linked (GlcNAc...) asparagine glycosylation is present at asparagine 91.

This chain is Chondroitin proteoglycan 7 (cpg-7), found in Caenorhabditis briggsae.